The following is a 98-amino-acid chain: Cytochrome b (98 aa).

3 helical membrane-spanning segments follow: residues 1-18 (LLGL…FLAM), 42-63 (WLIR…YLHV), and 78-98 (WNIG…GYVL). 2 residues coordinate heme b: histidine 48 and histidine 62.

The protein belongs to the cytochrome b family. The cytochrome bc1 complex contains 3 respiratory subunits (MT-CYB, CYC1 and UQCRFS1), 2 core proteins (UQCRC1 and UQCRC2) and probably 6 low-molecular weight proteins. It depends on heme b as a cofactor.

It is found in the mitochondrion inner membrane. Its function is as follows. Component of the ubiquinol-cytochrome c reductase complex (complex III or cytochrome b-c1 complex) that is part of the mitochondrial respiratory chain. The b-c1 complex mediates electron transfer from ubiquinol to cytochrome c. Contributes to the generation of a proton gradient across the mitochondrial membrane that is then used for ATP synthesis. This chain is Cytochrome b (mt-cyb), found in Scaphirhynchus platorynchus (Shovelnose sturgeon).